A 120-amino-acid chain; its full sequence is Spermidine export protein MdtJ (120 aa).

The next 4 helical transmembrane spans lie at 1-21, 31-51, 54-74, and 81-101; these read MFYW…TLSM, AGFI…SFAV, IALG…ITIF, and EALS…IVLI.

It belongs to the drug/metabolite transporter (DMT) superfamily. Small multidrug resistance (SMR) (TC 2.A.7.1) family. MdtJ subfamily. As to quaternary structure, forms a complex with MdtI.

The protein resides in the cell inner membrane. In terms of biological role, catalyzes the excretion of spermidine. In Salmonella paratyphi A (strain ATCC 9150 / SARB42), this protein is Spermidine export protein MdtJ.